We begin with the raw amino-acid sequence, 343 residues long: Small ribosomal subunit biogenesis GTPase RsgA (343 aa).

One can recognise a CP-type G domain in the interval 116–275 (RGQLKPVAAN…LIDSPGIREF (160 aa)). GTP is bound by residues 163-166 (NKFD) and 217-225 (GQSGVGKSS). Positions 299, 304, 306, and 312 each coordinate Zn(2+).

It belongs to the TRAFAC class YlqF/YawG GTPase family. RsgA subfamily. In terms of assembly, monomer. Associates with 30S ribosomal subunit, binds 16S rRNA. The cofactor is Zn(2+).

The protein resides in the cytoplasm. Its function is as follows. One of several proteins that assist in the late maturation steps of the functional core of the 30S ribosomal subunit. Helps release RbfA from mature subunits. May play a role in the assembly of ribosomal proteins into the subunit. Circularly permuted GTPase that catalyzes slow GTP hydrolysis, GTPase activity is stimulated by the 30S ribosomal subunit. This is Small ribosomal subunit biogenesis GTPase RsgA from Pseudomonas fluorescens (strain Pf0-1).